We begin with the raw amino-acid sequence, 295 residues long: Acetylglutamate kinase (295 aa).

Residues G66–G67, R88, and N193 each bind substrate.

It belongs to the acetylglutamate kinase family. ArgB subfamily.

The protein localises to the cytoplasm. It catalyses the reaction N-acetyl-L-glutamate + ATP = N-acetyl-L-glutamyl 5-phosphate + ADP. Its pathway is amino-acid biosynthesis; L-arginine biosynthesis; N(2)-acetyl-L-ornithine from L-glutamate: step 2/4. Its function is as follows. Catalyzes the ATP-dependent phosphorylation of N-acetyl-L-glutamate. The chain is Acetylglutamate kinase from Rhizobium etli (strain ATCC 51251 / DSM 11541 / JCM 21823 / NBRC 15573 / CFN 42).